A 151-amino-acid chain; its full sequence is Ribosome maturation factor RimP (151 aa).

This sequence belongs to the RimP family.

The protein resides in the cytoplasm. Its function is as follows. Required for maturation of 30S ribosomal subunits. The polypeptide is Ribosome maturation factor RimP (Shewanella denitrificans (strain OS217 / ATCC BAA-1090 / DSM 15013)).